The following is a 616-amino-acid chain: MDKQAERDQSAGPVKTPQETQPPAHNYTYHTNAAQRAVYDYLKNVKPIPELAEPKTYKTYEEASVEAVLYPIIEKHQVIMVAGAFFGDEGKGKTVNAVANHPGCTFIARVNSGENAGHTVYDDAGRKFVFNLAPSGLLSKGKRNYVGPECVMDPISFMENEVKQLIEANVPYKEQLFIGNVSIVTPYHKLLDLLASAPNSSTLKGMAPIHASKVTKRGIRLDHIFNDQSVLRSRLRKDIDTYFGFLKVKGLSDADVLRRCEKENGDGVVRVPPYVVEFVQAEDKVEYLVKLYMDRVRNNKNFPARCDVAHELRSALSRGEKVMLEGPQSYWLSNAREKFWESTTSADTTASGLLATAQYNFQLYSSVVINVHKAPGSSRVGVGANPSSFVAQDYFSAKGVKTLRDLPENMCVDFDSIQKLFFTKAFHPETKEYNGIWEPLEFEDSTGKYNIGVAMAVASSRHHGECGAVTKKPRVCGFFDCVLQYEVNAVQGPYLSISALDRGDDYDKLGITIAYVYYNGKNNEVLNINGREYKNGDIIKAGEAVPGEAALYYCHPIVKLINGWKQTPIAASKRKPGDPLPRGVCEFLSTVEYFTKAKIISIGNGPRGKDIIYIKQ.

Positions Met1 to Asn26 are disordered. The span at Pro17 to Asn26 shows a compositional bias: polar residues. Residues Gly87–Lys93 and Gly117–Thr119 contribute to the GTP site. The active-site Proton acceptor is Asp88. 2 residues coordinate Mg(2+): Asp88 and Gly117. IMP contacts are provided by residues Asp88–Lys91, Asn115–His118, Thr202, Lys216, Gln328, Thr343, and Lys472. Residue His118 is the Proton donor of the active site. Residue Ala468–Arg474 participates in substrate binding. GTP is bound by residues Arg474 and Gly603–Gly605.

This sequence belongs to the adenylosuccinate synthetase family. Homodimer. It depends on Mg(2+) as a cofactor.

It localises to the cytoplasm. The enzyme catalyses IMP + L-aspartate + GTP = N(6)-(1,2-dicarboxyethyl)-AMP + GDP + phosphate + 2 H(+). It participates in purine metabolism; AMP biosynthesis via de novo pathway; AMP from IMP: step 1/2. In terms of biological role, plays an important role in the salvage pathway for purine nucleotide biosynthesis. Catalyzes the first committed step in the biosynthesis of AMP from IMP. In Trypanosoma cruzi (strain CL Brener), this protein is Adenylosuccinate synthetase 2.